Reading from the N-terminus, the 130-residue chain is Small ribosomal subunit protein bS6 (130 aa).

Positions 99–130 (ASPMVKAKDERRERHDFASEANDDSEAGDSEE) are disordered. Basic and acidic residues predominate over residues 104–116 (KAKDERRERHDFA). Residues 119 to 130 (ANDDSEAGDSEE) are compositionally biased toward acidic residues.

This sequence belongs to the bacterial ribosomal protein bS6 family.

Binds together with bS18 to 16S ribosomal RNA. The chain is Small ribosomal subunit protein bS6 from Yersinia enterocolitica serotype O:8 / biotype 1B (strain NCTC 13174 / 8081).